The sequence spans 84 residues: Small ribosomal subunit protein uS17 (84 aa).

This sequence belongs to the universal ribosomal protein uS17 family. As to quaternary structure, part of the 30S ribosomal subunit.

One of the primary rRNA binding proteins, it binds specifically to the 5'-end of 16S ribosomal RNA. In Sodalis glossinidius (strain morsitans), this protein is Small ribosomal subunit protein uS17.